The primary structure comprises 661 residues: MSDGTATPDPLPSSSNTSTSLRPTSRVRDESDVIGKLNDMIEEQPTDIFLYVKLLKHHVSLKQWKQVYETFDKLHDRFPLMANIWCMRLSLEFDKMEELDAAVIEPVLARCLSKELGNNDLSLWLSYITYVRKKNDIITGGEEARNIVIQAFQVVVDKCAIFEPKSIQFWNEYLHFLEHWKPVNKFEEQQRVQYIRKLYKTLLCQPMDCLESMWQRYTQWEQDVNQLTARRHIGELSAQYMNARSLYQDWLNITKGLKRNLPITLNQATESNLPKPNEYDVQQLLIWLEWIRWESDNKLELSDDLHKARMTYVYMQAAQHVCFAPEIWFNMANYQGEKNTDSTVITKYLKLGQQCIPNSAVLAFSLSEQYELNTKIPEIETTILSCIDRIHLDLAALMEDDPTNESAINQLKSKLTYVYCVYMNTMKRIQGLAASRKIFGKCRRLKKLVTPDIYLENAYIEYHISKDTKTACKVLELGLKYFATDGEYINKYLDFLIYVNEESQVKSLFESSIDKISDSHLLKMIFQKVIFFESKVGSLNSVRTLEKRFFEKFPEVNKLEEFTNKYKVLDVNYLQRLELDYMVRDVMPEAIALDRGSNNLKRTMREEEDGQAFKKFKANEDPIPPEIVELLKVLPKRQYFKVTIFEAHAFSEFLSDKVTIQ.

Residues 1–29 (MSDGTATPDPLPSSSNTSTSLRPTSRVRD) are disordered. Residues 12 to 24 (PSSSNTSTSLRPT) are compositionally biased toward low complexity. HAT repeat units follow at residues 62–94 (KQWK…LEFD), 99–133 (LDAA…YVRK), 143–179 (EARN…FLEH), 190–223 (QRVQ…WEQD), 264–296 (TLNQ…WESD), and 305–337 (LHKA…YQGE).

It is found in the nucleus. Its subcellular location is the cytoplasm. Its function is as follows. Component of the cleavage factor IA (CFIA) complex, which is involved in the endonucleolytic cleavage during polyadenylation-dependent pre-mRNA 3'-end formation. The protein is mRNA 3'-end-processing protein RNA14 (RNA14) of Kluyveromyces lactis (strain ATCC 8585 / CBS 2359 / DSM 70799 / NBRC 1267 / NRRL Y-1140 / WM37) (Yeast).